The primary structure comprises 145 residues: D-aminoacyl-tRNA deacylase (145 aa).

The short motif at 137–138 (GP) is the Gly-cisPro motif, important for rejection of L-amino acids element.

The protein belongs to the DTD family. Homodimer.

The protein localises to the cytoplasm. The enzyme catalyses glycyl-tRNA(Ala) + H2O = tRNA(Ala) + glycine + H(+). It catalyses the reaction a D-aminoacyl-tRNA + H2O = a tRNA + a D-alpha-amino acid + H(+). Its function is as follows. An aminoacyl-tRNA editing enzyme that deacylates mischarged D-aminoacyl-tRNAs. Also deacylates mischarged glycyl-tRNA(Ala), protecting cells against glycine mischarging by AlaRS. Acts via tRNA-based rather than protein-based catalysis; rejects L-amino acids rather than detecting D-amino acids in the active site. By recycling D-aminoacyl-tRNA to D-amino acids and free tRNA molecules, this enzyme counteracts the toxicity associated with the formation of D-aminoacyl-tRNA entities in vivo and helps enforce protein L-homochirality. The sequence is that of D-aminoacyl-tRNA deacylase from Carboxydothermus hydrogenoformans (strain ATCC BAA-161 / DSM 6008 / Z-2901).